A 418-amino-acid chain; its full sequence is Serine hydroxymethyltransferase (418 aa).

(6S)-5,6,7,8-tetrahydrofolate-binding positions include Leu-121 and 125–127; that span reads GHL. N6-(pyridoxal phosphate)lysine is present on Lys-230. (6S)-5,6,7,8-tetrahydrofolate is bound at residue 355–357; sequence SPF.

The protein belongs to the SHMT family. In terms of assembly, homodimer. Pyridoxal 5'-phosphate serves as cofactor.

Its subcellular location is the cytoplasm. It catalyses the reaction (6R)-5,10-methylene-5,6,7,8-tetrahydrofolate + glycine + H2O = (6S)-5,6,7,8-tetrahydrofolate + L-serine. It functions in the pathway one-carbon metabolism; tetrahydrofolate interconversion. It participates in amino-acid biosynthesis; glycine biosynthesis; glycine from L-serine: step 1/1. Its function is as follows. Catalyzes the reversible interconversion of serine and glycine with tetrahydrofolate (THF) serving as the one-carbon carrier. This reaction serves as the major source of one-carbon groups required for the biosynthesis of purines, thymidylate, methionine, and other important biomolecules. Also exhibits THF-independent aldolase activity toward beta-hydroxyamino acids, producing glycine and aldehydes, via a retro-aldol mechanism. The sequence is that of Serine hydroxymethyltransferase from Methylococcus capsulatus (strain ATCC 33009 / NCIMB 11132 / Bath).